The sequence spans 270 residues: 4-hydroxy-tetrahydrodipicolinate reductase (270 aa).

NAD(+)-binding positions include 9 to 14 and Glu35; that span reads GAGGRM. Residue Arg36 coordinates NADP(+). Residues 99–101 and 123–126 contribute to the NAD(+) site; these read GTT and ASNY. The active-site Proton donor/acceptor is His156. His157 contacts (S)-2,3,4,5-tetrahydrodipicolinate. Lys160 serves as the catalytic Proton donor. (S)-2,3,4,5-tetrahydrodipicolinate is bound at residue 166–167; sequence GT.

Belongs to the DapB family.

The protein localises to the cytoplasm. The enzyme catalyses (S)-2,3,4,5-tetrahydrodipicolinate + NAD(+) + H2O = (2S,4S)-4-hydroxy-2,3,4,5-tetrahydrodipicolinate + NADH + H(+). The catalysed reaction is (S)-2,3,4,5-tetrahydrodipicolinate + NADP(+) + H2O = (2S,4S)-4-hydroxy-2,3,4,5-tetrahydrodipicolinate + NADPH + H(+). The protein operates within amino-acid biosynthesis; L-lysine biosynthesis via DAP pathway; (S)-tetrahydrodipicolinate from L-aspartate: step 4/4. In terms of biological role, catalyzes the conversion of 4-hydroxy-tetrahydrodipicolinate (HTPA) to tetrahydrodipicolinate. The protein is 4-hydroxy-tetrahydrodipicolinate reductase of Histophilus somni (strain 129Pt) (Haemophilus somnus).